Reading from the N-terminus, the 277-residue chain is Sulfate transport system permease protein CysT (277 aa).

Transmembrane regions (helical) follow at residues L17–M37, L64–I84, L99–F119, V136–V156, F185–F205, V215–V235, and P243–I263. Positions Y60 to I263 constitute an ABC transmembrane type-1 domain.

It belongs to the binding-protein-dependent transport system permease family. CysTW subfamily. In terms of assembly, the complex is composed of two ATP-binding proteins (CysA), two transmembrane proteins (CysT and CysW) and a solute-binding protein (CysP).

The protein resides in the cell inner membrane. Its function is as follows. Part of the ABC transporter complex CysAWTP (TC 3.A.1.6.1) involved in sulfate/thiosulfate import. Probably responsible for the translocation of the substrate across the membrane. The sequence is that of Sulfate transport system permease protein CysT (cysU) from Escherichia coli (strain K12).